The sequence spans 513 residues: MAQVFPDVIEEKIQDDDKFFGQTRLKNDDIDFNDPDNVLTMKNIHKTYLLGIEGVPALRGVSMAIKRGEFICIFGTSGGGKTTMLNIIGTIDKPTKGEMKLCGKTINHKTTDKDLAFLRLRNIGFVFQTFNLLSSLTALENVEMPMILLGELSASERRERAISLLTKVGMKDRLDHFPSQLSGGEQQRVTIARAIANNPDVLLLDEPTGDLDTVNTSVIMKLLTDLNKQENITLIMVTHDVGLKMYSDRIIWMRDGKIQRIETVQEQSKREHYQKLYKECELINQNQKNGVTSVFKNDDDNKNIKKQGTLTEFRRPTDYKSIASYNNNNSNLNNNSNSNSNNNSNNNNSKNYASSSSSSSVLNGKLSQSTVNNSSIYNHNNDSPFFNSNNNNNINNNINNNNNNNNNNNNNNNNNNNNNNNNNNNNNNSNSNNNNSNSNNNNNNTKSNNNNNNNIFDIASSSSSYSNNNNNSKNNSLIDDIYLDINEGSSSNFSNNDNFKSVDQITNDLSRIL.

Residues 39–280 enclose the ABC transporter domain; that stretch reads LTMKNIHKTY…EHYQKLYKEC (242 aa). Residue 75 to 82 coordinates ATP; that stretch reads GTSGGGKT. Residues 291–471 are disordered; that stretch reads VTSVFKNDDD…SSSYSNNNNN (181 aa). Over residues 324–360 the composition is skewed to low complexity; sequence SYNNNNSNLNNNSNSNSNNNSNNNNSKNYASSSSSSS. Over residues 361–386 the composition is skewed to polar residues; it reads VLNGKLSQSTVNNSSIYNHNNDSPFF. Low complexity predominate over residues 387–471; it reads NSNNNNNINN…SSSYSNNNNN (85 aa).

Belongs to the ABC transporter superfamily.

The chain is ABC transporter H family member 2 (abcH2) from Dictyostelium discoideum (Social amoeba).